Consider the following 500-residue polypeptide: 4-aminobutyrate aminotransferase, mitochondrial (500 aa).

A mitochondrion-targeting transit peptide spans 1–28 (MASVLLTRRLACSFRHNHRLLVPGWRHI). Position 163 (Cys-163) interacts with [2Fe-2S] cluster. Residue 164-165 (GS) coordinates pyridoxal 5'-phosphate. Residue Cys-166 coordinates [2Fe-2S] cluster. Arg-220 serves as a coordination point for substrate. Lys-231 is subject to N6-succinyllysine. At Lys-252 the chain carries N6-acetyllysine; alternate. Residue Lys-252 is modified to N6-succinyllysine; alternate. Lys-279 and Lys-318 each carry N6-acetyllysine. Lys-357 bears the N6-(pyridoxal phosphate)lysine mark. Residue Thr-381 participates in pyridoxal 5'-phosphate binding. Lys-413 is subject to N6-acetyllysine; alternate. An N6-succinyllysine; alternate modification is found at Lys-413. N6-acetyllysine occurs at positions 452 and 470.

The protein belongs to the class-III pyridoxal-phosphate-dependent aminotransferase family. In terms of assembly, homodimer; disulfide-linked. Pyridoxal 5'-phosphate is required as a cofactor. [2Fe-2S] cluster serves as cofactor.

Its subcellular location is the mitochondrion matrix. The catalysed reaction is 4-aminobutanoate + 2-oxoglutarate = succinate semialdehyde + L-glutamate. It catalyses the reaction (S)-3-amino-2-methylpropanoate + 2-oxoglutarate = 2-methyl-3-oxopropanoate + L-glutamate. Its function is as follows. Catalyzes the conversion of gamma-aminobutyrate and L-beta-aminoisobutyrate to succinate semialdehyde and methylmalonate semialdehyde, respectively. Can also convert delta-aminovalerate and beta-alanine. This Sus scrofa (Pig) protein is 4-aminobutyrate aminotransferase, mitochondrial (ABAT).